Here is a 128-residue protein sequence, read N- to C-terminus: Small ribosomal subunit protein eS8 (128 aa).

Belongs to the eukaryotic ribosomal protein eS8 family. In terms of assembly, part of the 30S ribosomal subunit.

The chain is Small ribosomal subunit protein eS8 from Methanococcus aeolicus (strain ATCC BAA-1280 / DSM 17508 / OCM 812 / Nankai-3).